The sequence spans 543 residues: Adenosine deaminase 2 (543 aa).

The signal sequence occupies residues 1 to 26 (MFLKFKNIFFIVLTLSIVFNGLIVNS). A compositionally biased stretch (low complexity) spans 31–54 (INNKNNNNNNNNKDLSSSESGSSS). A disordered region spans residues 31-58 (INNKNNNNNNNNKDLSSSESGSSSDINP). N-linked (GlcNAc...) asparagine glycosylation occurs at N126. Zn(2+) contacts are provided by H144 and H146. Residue N179 is glycosylated (N-linked (GlcNAc...) asparagine). 232-239 (WRKFDGIF) serves as a coordination point for substrate. N-linked (GlcNAc...) asparagine glycosylation is found at N309 and N326. G355 serves as a coordination point for substrate. H389 contributes to the Zn(2+) binding site. E392 acts as the Proton donor in catalysis. N397 carries N-linked (GlcNAc...) asparagine glycosylation. The Proton acceptor role is filled by H414. Residue D471 participates in Zn(2+) binding. Residue D472 coordinates substrate. N-linked (GlcNAc...) asparagine glycans are attached at residues N508 and N514.

It belongs to the metallo-dependent hydrolases superfamily. Adenosine and AMP deaminases family. ADGF subfamily. Requires Zn(2+) as cofactor.

The protein resides in the secreted. The enzyme catalyses adenosine + H2O + H(+) = inosine + NH4(+). Adenosine deaminase that may contribute to the degradation of extracellular adenosine, a signaling molecule that controls a variety of cellular responses. May play a role in the regulation of cell proliferation. In Dictyostelium discoideum (Social amoeba), this protein is Adenosine deaminase 2.